The sequence spans 320 residues: Cytochrome c biogenesis protein CcsA (320 aa).

A run of 8 helical transmembrane segments spans residues 13–33, 46–66, 73–93, 102–122, 147–167, 226–246, 259–274, and 289–309; these read ISFS…FLLV, GMIV…IYSG, LYES…VSYL, LSAI…SGLL, MVLG…LLVI, IISL…VWAN, ETWA…IYFH, and VASM…LLGI.

This sequence belongs to the CcmF/CycK/Ccl1/NrfE/CcsA family. As to quaternary structure, may interact with Ccs1.

It is found in the plastid. It localises to the chloroplast thylakoid membrane. Its function is as follows. Required during biogenesis of c-type cytochromes (cytochrome c6 and cytochrome f) at the step of heme attachment. The polypeptide is Cytochrome c biogenesis protein CcsA (Gossypium hirsutum (Upland cotton)).